We begin with the raw amino-acid sequence, 401 residues long: Probable N-acetyl-gamma-glutamyl-phosphate reductase, chloroplastic (401 aa).

Residues 1–48 (MSTASAFSSIQGCWFKGERKIRVADKRAKRLTLGSHVASPSSMSFRVS) constitute a chloroplast transit peptide. Cys205 is a catalytic residue.

It belongs to the NAGSA dehydrogenase family. Type 1 subfamily. In terms of assembly, homotetramer.

It is found in the plastid. The protein resides in the chloroplast. The enzyme catalyses N-acetyl-L-glutamate 5-semialdehyde + phosphate + NADP(+) = N-acetyl-L-glutamyl 5-phosphate + NADPH + H(+). It functions in the pathway amino-acid biosynthesis; L-arginine biosynthesis; N(2)-acetyl-L-ornithine from L-glutamate: step 3/4. The polypeptide is Probable N-acetyl-gamma-glutamyl-phosphate reductase, chloroplastic (Arabidopsis thaliana (Mouse-ear cress)).